The primary structure comprises 158 residues: uncharacterized protein (158 aa).

This is an uncharacterized protein from Acidianus convivator (ABV).